A 356-amino-acid chain; its full sequence is Tyrosine recombinase XerS (356 aa).

The region spanning 16–121 (LMPWFVLEYY…ALSSLYKYLT (106 aa)) is the Core-binding (CB) domain. The Tyr recombinase domain occupies 169-354 (KFLDYVENEY…VNDEQKNALD (186 aa)). Residues arginine 210, lysine 234, histidine 306, arginine 309, and histidine 332 contribute to the active site. The active-site O-(3'-phospho-DNA)-tyrosine intermediate is the tyrosine 341.

It belongs to the 'phage' integrase family. XerS subfamily.

It is found in the cytoplasm. Its activity is regulated as follows. FtsK is required for recombination. Site-specific tyrosine recombinase, which acts by catalyzing the cutting and rejoining of the recombining DNA molecules. Essential to convert dimers of the bacterial chromosome into monomers to permit their segregation at cell division. This chain is Tyrosine recombinase XerS, found in Streptococcus thermophilus (strain ATCC BAA-491 / LMD-9).